Here is a 513-residue protein sequence, read N- to C-terminus: Carboxyethyl-arginine beta-lactam-synthase (513 aa).

The Mg(2+) site is built by D253 and D351.

It belongs to the asparagine synthetase family. Homodimer. The cofactor is Mg(2+).

It catalyses the reaction N(2)-(2-carboxyethyl)-L-arginine + ATP = deoxyamidinoproclavaminate + AMP + diphosphate + H(+). The protein operates within antibiotic biosynthesis; clavulanate biosynthesis; clavulanate from D-glyceraldehyde 3-phosphate and L-arginine: step 2/8. The chain is Carboxyethyl-arginine beta-lactam-synthase (bls) from Streptomyces clavuligerus.